Reading from the N-terminus, the 278-residue chain is uncharacterized protein (278 aa).

NAD(+) is bound by residues 112–113 (HI), 191–193 (VGR), and Asp217. Arg193 is a catalytic residue. Residue Glu222 is part of the active site. His241 serves as the catalytic Proton donor. An NAD(+)-binding site is contributed by 241-244 (HSAG).

It belongs to the D-isomer specific 2-hydroxyacid dehydrogenase family.

This is an uncharacterized protein from Streptomyces coelicolor.